The sequence spans 116 residues: Phosphoribosyl-AMP cyclohydrolase (116 aa).

Aspartate 80 is a Mg(2+) binding site. Zn(2+) is bound at residue cysteine 81. Residues aspartate 82 and aspartate 84 each coordinate Mg(2+). Positions 98 and 105 each coordinate Zn(2+).

Belongs to the PRA-CH family. As to quaternary structure, homodimer. It depends on Mg(2+) as a cofactor. Zn(2+) is required as a cofactor.

The protein resides in the cytoplasm. It catalyses the reaction 1-(5-phospho-beta-D-ribosyl)-5'-AMP + H2O = 1-(5-phospho-beta-D-ribosyl)-5-[(5-phospho-beta-D-ribosylamino)methylideneamino]imidazole-4-carboxamide. It participates in amino-acid biosynthesis; L-histidine biosynthesis; L-histidine from 5-phospho-alpha-D-ribose 1-diphosphate: step 3/9. In terms of biological role, catalyzes the hydrolysis of the adenine ring of phosphoribosyl-AMP. The chain is Phosphoribosyl-AMP cyclohydrolase from Trichormus variabilis (strain ATCC 29413 / PCC 7937) (Anabaena variabilis).